Here is a 620-residue protein sequence, read N- to C-terminus: Chaperone protein HscA homolog (620 aa).

Belongs to the heat shock protein 70 family.

Functionally, chaperone involved in the maturation of iron-sulfur cluster-containing proteins. Has a low intrinsic ATPase activity which is markedly stimulated by HscB. The sequence is that of Chaperone protein HscA homolog from Paracidovorax citrulli (strain AAC00-1) (Acidovorax citrulli).